The chain runs to 215 residues: Hibernation-associated plasma protein HP-25 (215 aa).

The N-terminal stretch at 1 to 28 (MPAQRGGALSMGAAGFWILVLSITSALA) is a signal peptide. A disordered region spans residues 29 to 96 (DSNNQGNSEP…RPKSAFAVKL (68 aa)). 2 stretches are compositionally biased toward pro residues: residues 39 to 51 (CGPPGPPGPPGIP) and 60 to 77 (LGPPGPPGVPGIPGPQGP). In terms of domain architecture, Collagen-like spans 40–81 (GPPGPPGPPGIPGFPGAPGALGPPGPPGVPGIPGPQGPPGDV). Positions 85-215 (SSRPKSAFAV…VFFGYLLYGK (131 aa)) constitute a C1q domain. N-linked (GlcNAc...) asparagine glycosylation is present at N167.

In terms of tissue distribution, plasma; synthesized in the liver.

It localises to the secreted. Its function is as follows. Plasma proteins HP-20, HP-25, HP-27 and HP-55 form a 140 kDa complex via disulfide bonds in the plasma and are hibernation specific. This is Hibernation-associated plasma protein HP-25 from Tamias sibiricus (Siberian chipmunk).